The chain runs to 73 residues: UPF0435 protein lwe1727 (73 aa).

The protein belongs to the UPF0435 family.

This Listeria welshimeri serovar 6b (strain ATCC 35897 / DSM 20650 / CCUG 15529 / CIP 8149 / NCTC 11857 / SLCC 5334 / V8) protein is UPF0435 protein lwe1727.